The following is a 690-amino-acid chain: Potassium-transporting ATPase ATP-binding subunit (690 aa).

The disordered stretch occupies residues 1–23 (MNSTSTVRQPGGPRQQRRHTPKA). Transmembrane regions (helical) follow at residues 44–64 (IMVK…TGML), 78–98 (AMFN…ANFA), 233–253 (IALT…VATL), and 268–288 (LLIA…LSAI). Catalysis depends on D321, which acts as the 4-aspartylphosphate intermediate. ATP is bound by residues D358, E362, 389–396 (FSARTRMS), and K408. Mg(2+)-binding residues include D531 and D535. A run of 3 helical transmembrane segments spans residues 601–621 (FAII…IMDL), 627–647 (AVLS…PLAL), and 665–685 (ILVY…LIDL).

Belongs to the cation transport ATPase (P-type) (TC 3.A.3) family. Type IA subfamily. The system is composed of three essential subunits: KdpA, KdpB and KdpC.

It localises to the cell inner membrane. The enzyme catalyses K(+)(out) + ATP + H2O = K(+)(in) + ADP + phosphate + H(+). In terms of biological role, part of the high-affinity ATP-driven potassium transport (or Kdp) system, which catalyzes the hydrolysis of ATP coupled with the electrogenic transport of potassium into the cytoplasm. This subunit is responsible for energy coupling to the transport system and for the release of the potassium ions to the cytoplasm. The protein is Potassium-transporting ATPase ATP-binding subunit of Synechocystis sp. (strain ATCC 27184 / PCC 6803 / Kazusa).